We begin with the raw amino-acid sequence, 325 residues long: ATP phosphoribosyltransferase (325 aa).

It belongs to the ATP phosphoribosyltransferase family. Long subfamily. Mg(2+) is required as a cofactor.

It is found in the cytoplasm. It carries out the reaction 1-(5-phospho-beta-D-ribosyl)-ATP + diphosphate = 5-phospho-alpha-D-ribose 1-diphosphate + ATP. The protein operates within amino-acid biosynthesis; L-histidine biosynthesis; L-histidine from 5-phospho-alpha-D-ribose 1-diphosphate: step 1/9. With respect to regulation, feedback inhibited by histidine. In terms of biological role, catalyzes the condensation of ATP and 5-phosphoribose 1-diphosphate to form N'-(5'-phosphoribosyl)-ATP (PR-ATP). Has a crucial role in the pathway because the rate of histidine biosynthesis seems to be controlled primarily by regulation of HisG enzymatic activity. The polypeptide is ATP phosphoribosyltransferase (Rhodopseudomonas palustris (strain BisB18)).